The following is a 305-amino-acid chain: Transcriptional activator protein PfeR (305 aa).

A Response regulatory domain is found at 79-192 (RLLLVEDDPR…ELDARTDALL (114 aa)). The residue at position 128 (aspartate 128) is a 4-aspartylphosphate. The ompR/PhoB-type DNA-binding region spans 200–301 (LPLAQRRDTR…VRGQGYLLVE (102 aa)).

Phosphorylated by PfeS.

The protein resides in the cytoplasm. Member of the two-component regulatory system PfeR/PfeS. Activates expression of the ferric enterobactin receptor. The chain is Transcriptional activator protein PfeR (pfeR) from Pseudomonas aeruginosa (strain ATCC 15692 / DSM 22644 / CIP 104116 / JCM 14847 / LMG 12228 / 1C / PRS 101 / PAO1).